We begin with the raw amino-acid sequence, 152 residues long: Pertussis toxin subunit 4 (152 aa).

The signal sequence occupies residues 1-42 (MLRRFPTRTTAPGQGGARRSRVRALAWLLASGAMTHLSPALA). Cystine bridges form between cysteine 73–cysteine 93 and cysteine 145–cysteine 151.

Pertussis toxin contains five different chains, S1-S5. They are organized into 2 functional subunits: A, composed of S1 (which is toxic) and B, containing S2, S3, S5, and two copies of S4 (B binds to the membrane receptors). Dimers of S2-S4 and S3-S4 are held together by S5.

The protein resides in the secreted. The protein localises to the host cell membrane. Its function is as follows. PTX oligomer B binds to receptors on the eukaryotic cell surface and facilitates the translocation of the toxic subunit across the cell membrane. In Bordetella parapertussis (strain 12822 / ATCC BAA-587 / NCTC 13253), this protein is Pertussis toxin subunit 4 (ptxD).